The following is a 287-amino-acid chain: Bifunctional protein FolD (287 aa).

NADP(+)-binding positions include 160 to 162 (GRS), serine 189, and threonine 230.

It belongs to the tetrahydrofolate dehydrogenase/cyclohydrolase family. In terms of assembly, homodimer.

The catalysed reaction is (6R)-5,10-methylene-5,6,7,8-tetrahydrofolate + NADP(+) = (6R)-5,10-methenyltetrahydrofolate + NADPH. It carries out the reaction (6R)-5,10-methenyltetrahydrofolate + H2O = (6R)-10-formyltetrahydrofolate + H(+). The protein operates within one-carbon metabolism; tetrahydrofolate interconversion. In terms of biological role, catalyzes the oxidation of 5,10-methylenetetrahydrofolate to 5,10-methenyltetrahydrofolate and then the hydrolysis of 5,10-methenyltetrahydrofolate to 10-formyltetrahydrofolate. The polypeptide is Bifunctional protein FolD (Chlamydia caviae (strain ATCC VR-813 / DSM 19441 / 03DC25 / GPIC) (Chlamydophila caviae)).